The following is a 354-amino-acid chain: NADH-quinone oxidoreductase subunit H (354 aa).

The next 8 helical transmembrane spans lie at 25-45 (LVRILVVAVVILLCVAYLILW), 91-111 (WLYLVAPVMTVVPAFAVWAVI), 126-146 (LLYAMAISSIGVYAVILAGWA), 170-190 (MGFALVLVLMTAGSLNLSEIV), 205-225 (FLSWNWLPLLPVFVIYFISGI), 253-273 (MAFALFFLAEYINMIVISALA), 290-310 (FIPGIFWLVLKIFALLSVFIW), and 330-350 (VFLPVCVFWVIVVGFWMMSPL).

This sequence belongs to the complex I subunit 1 family. In terms of assembly, NDH-1 is composed of 14 different subunits. Subunits NuoA, H, J, K, L, M, N constitute the membrane sector of the complex.

It localises to the cell inner membrane. It catalyses the reaction a quinone + NADH + 5 H(+)(in) = a quinol + NAD(+) + 4 H(+)(out). NDH-1 shuttles electrons from NADH, via FMN and iron-sulfur (Fe-S) centers, to quinones in the respiratory chain. The immediate electron acceptor for the enzyme in this species is believed to be ubiquinone. Couples the redox reaction to proton translocation (for every two electrons transferred, four hydrogen ions are translocated across the cytoplasmic membrane), and thus conserves the redox energy in a proton gradient. This subunit may bind ubiquinone. This chain is NADH-quinone oxidoreductase subunit H, found in Burkholderia mallei (strain ATCC 23344).